The following is a 590-amino-acid chain: Suprabasin (590 aa).

The N-terminal stretch at 1-25 (MHLARLVGSCSLLLLLGALSGWAAS) is a signal peptide. Disordered stretches follow at residues 182-213 (GNEAGRFGQGVHHAAGQAGNEAGRFGQGAHHG), 242-266 (FGQGAHHAAGQAGNEAGRFGQGVHH), 297-338 (GQGA…GVHH), and 545-570 (LNGNHQSGSSSHQGGATTTPLASGAS). Low complexity-rich tracts occupy residues 190–200 (QGVHHAAGQAG), 243–254 (GQGAHHAAGQAG), 297–330 (GQGAHHAAGQAGNEAGRFGQGAHHAAGQAGNEAG), and 546–559 (NGNHQSGSSSHQGG). Residues 560-570 (ATTTPLASGAS) are compositionally biased toward polar residues.

In terms of tissue distribution, detected in thymus, uterus and esophagus.

The protein localises to the secreted. The chain is Suprabasin (SBSN) from Homo sapiens (Human).